The following is a 1055-amino-acid chain: Cell-division control histidine kinase PdhS (1055 aa).

The segment at Met-1–Asp-626 is important for polar localization. The tract at residues Asp-419–Arg-439 is disordered. The interaction with DivK stretch occupies residues Ala-627–Asp-1055. The region spanning His-679–Val-750 is the PAS domain. Positions Arg-822–Arg-1051 constitute a Histidine kinase domain. At His-825 the chain carries Phosphohistidine; by autocatalysis.

In terms of assembly, interacts with DivK.

The protein localises to the cytoplasm. The catalysed reaction is ATP + protein L-histidine = ADP + protein N-phospho-L-histidine.. In terms of biological role, functions as a polar differentiation marker. Essential protein that, by localizing in the old pole of dividing cells, controls cell division and maturation, probably through control of DivK phosphorylation status and cellular distribution, which in turn regulates CtrA, a transcriptional regulator of the minB operon. The asymmetrical localization of this protein is probably required for cells to enter a new division cycle. The protein is Cell-division control histidine kinase PdhS (pdhS) of Brucella anthropi (strain ATCC 49188 / DSM 6882 / CCUG 24695 / JCM 21032 / LMG 3331 / NBRC 15819 / NCTC 12168 / Alc 37) (Ochrobactrum anthropi).